The primary structure comprises 333 residues: MKKVKIFDLTLRDGSHAKSHQFTPEQMAVLAEQIDSTGVAAIEFGHGNGLGGSALQYGFAAATDREYMEAVAPVVKNADLSIIILPGVGTRHELHLAKEFGAKYARMCTQITEVDIAEQHIKMAKQLGMIPIAVLPCAGIIPVKDTVRYTQMAESYGAEVIYLLDGGGYQLPEQTYERIAAMKKAVDVPIGFHGHNNLQLAVANSKAAVEAGAEYIDCCLKGFGAGAGNCPTEIFAAVMDRMEIDCGIDLYKTMDIAEQYLRPLMPRAMEVDNDRIMLGYAGCYSSFLLFAQRAGARYGVDPRDIIKEIGRRQCTEGQEDICIDVAYALAQKK.

In terms of domain architecture, Pyruvate carboxyltransferase spans 4 to 254; that stretch reads VKIFDLTLRD…DCGIDLYKTM (251 aa). 12–13 provides a ligand contact to substrate; that stretch reads RD. A Mn(2+)-binding site is contributed by Asp-13. His-16 serves as the catalytic Proton acceptor. Residue His-193 participates in substrate binding. Positions 193 and 195 each coordinate Mn(2+). Tyr-284 is a binding site for substrate.

It belongs to the 4-hydroxy-2-oxovalerate aldolase family.

It carries out the reaction (S)-4-hydroxy-2-oxopentanoate = acetaldehyde + pyruvate. The sequence is that of 4-hydroxy-2-oxovalerate aldolase from Desulfitobacterium hafniense (strain DSM 10664 / DCB-2).